Consider the following 323-residue polypeptide: Calcium homeostasis modulator protein 2 (323 aa).

Residues 1 to 21 (MAALIAENFRFLSLFFKSKDV) lie on the Cytoplasmic side of the membrane. The interval 14-39 (LFFKSKDVMIFNGLVALGTVGSQELF) is central pore. Residues 22–43 (MIFNGLVALGTVGSQELFTVVA) traverse the membrane as a helical segment. Over 44-52 (FHCPCSPAR) the chain is Extracellular. Cystine bridges form between Cys46-Cys130 and Cys48-Cys162. The helical transmembrane segment at 53 to 76 (NYLYGLAAIGVPALALFLIGVILN) threads the bilayer. Topologically, residues 77-101 (NHTWNLVAECQYRRTKNCSAAPNFL) are cytoplasmic. Residues 102–132 (LLSSIVGRAAVAPVTWSVISLLRGEAYVCAL) traverse the membrane as a helical segment. Residues 133–179 (SEFVNPHSLMVGERSFPVAHATEILARFPCGEGPANLSVFREEVSRR) are Extracellular-facing. The hemichannel docking stretch occupies residues 145–152 (ERSFPVAH). The helical transmembrane segment at 180–206 (LKYESQLFGWLLIGVVAILVFLTKCLK) threads the bilayer. Over 207–323 (HYCSPLSYRQ…DHVEMSLLPS (117 aa)) the chain is Cytoplasmic. An intersubunit interaction region spans residues 214-251 (YRQEAYWAQYRANEDQLFQRTAEVHSRVLAANNVRRFF).

This sequence belongs to the CALHM family. In terms of assembly, homo-undecamer. Two undecameric hemichannels can assemble in a head-to-head manner to form a gap junction.

It localises to the cell membrane. The catalysed reaction is ATP(in) = ATP(out). Its function is as follows. Pore-forming subunit of Ca(2+) homeostasis modulator channels. Mediates ATP release from astrocytes and ATP-induced Ca(2+) influx in microglia thus regulating neuronal ATP and Ca(2+) homeostasis, synaptic transmission and neuroinflammatory response. May form intercellular gap junctions. The gating mechanism remains unknown. This is Calcium homeostasis modulator protein 2 (CALHM2) from Bos taurus (Bovine).